A 297-amino-acid chain; its full sequence is Urease accessory protein UreD (297 aa).

The protein belongs to the UreD family. In terms of assembly, ureD, UreF and UreG form a complex that acts as a GTP-hydrolysis-dependent molecular chaperone, activating the urease apoprotein by helping to assemble the nickel containing metallocenter of UreC. The UreE protein probably delivers the nickel.

The protein localises to the cytoplasm. Functionally, required for maturation of urease via the functional incorporation of the urease nickel metallocenter. The polypeptide is Urease accessory protein UreD (Anaeromyxobacter sp. (strain Fw109-5)).